We begin with the raw amino-acid sequence, 167 residues long: Large ribosomal subunit protein bL9 (167 aa).

It belongs to the bacterial ribosomal protein bL9 family.

Functionally, binds to the 23S rRNA. In Chlamydia trachomatis serovar L2 (strain ATCC VR-902B / DSM 19102 / 434/Bu), this protein is Large ribosomal subunit protein bL9.